A 263-amino-acid chain; its full sequence is uncharacterized protein (263 aa).

Residues 72 to 168 are a coiled coil; sequence LDKKETKELS…RTIVEIRNTK (97 aa). The disordered stretch occupies residues 76–158; the sequence is ETKELSKKEK…EKKEKKEKED (83 aa). A compositionally biased stretch (basic residues) spans 83-95; it reads KEKKQLKKEKKAL. Positions 96–107 are enriched in basic and acidic residues; it reads KKENKGGKDKKD. The span at 108–121 shows a compositional bias: basic residues; it reads KKDKKDKKDKKDKK. 2 stretches are compositionally biased toward basic and acidic residues: residues 122–131 and 139–158; these read DKKDKGDKKD and KHDDDKSEVKEKKEKKEKED.

This is an uncharacterized protein from Dictyostelium discoideum (Social amoeba).